We begin with the raw amino-acid sequence, 215 residues long: MADS-box transcription factor 4 (215 aa).

Residues methionine 1–lysine 61 form the MADS-box domain. The 87-residue stretch at histidine 89–glutamate 175 folds into the K-box domain.

As to quaternary structure, may interact with the K-box of MADS16. In terms of tissue distribution, highly expressed in lodicules, at intermediate levels in stamens, and weakly in carpels. Expressed in pollen.

The protein localises to the nucleus. Probable transcription factor involved in the development of floral organs. B-class protein required for normal development of lodicules and stamens (whorls 2 and 3). May function as a heterodimer with MADS16. The polypeptide is MADS-box transcription factor 4 (MADS4) (Oryza sativa subsp. japonica (Rice)).